The primary structure comprises 54 residues: Secreted virulence factor MC69 (54 aa).

Positions 1 to 16 (MKAAFVLALCASLASA) are cleaved as a signal peptide. Cysteines 36 and 46 form a disulfide.

It belongs to the MC69 virulence factor family.

The protein resides in the secreted. Secreted protein required for appressorial penetration of intact host epidermal cells and for pathogenicity. This chain is Secreted virulence factor MC69, found in Pyricularia oryzae (strain 70-15 / ATCC MYA-4617 / FGSC 8958) (Rice blast fungus).